A 204-amino-acid polypeptide reads, in one-letter code: uncharacterized protein (204 aa).

Positions 1–17 (MKRLVTGLLALSLFLAA) are cleaved as a signal peptide. Residues 17-102 (ACGQDSDQQK…NQSSNNQKSS (86 aa)) form a disordered region. C18 carries the N-palmitoyl cysteine lipid modification. C18 carries S-diacylglycerol cysteine lipidation. Residues 23–70 (DQQKDSNKEKDDKAKTEQQDKKTNDSSKDKKDNKDDSKDVNKDNKDNS) are compositionally biased toward basic and acidic residues. Residues 71 to 102 (ANDNQQQSNSNATNNDQNQTNNNQSSNNQKSS) show a composition bias toward low complexity.

The protein resides in the cell membrane. This is an uncharacterized protein from Staphylococcus aureus (strain Mu50 / ATCC 700699).